Consider the following 250-residue polypeptide: HTH-type transcriptional regulator SarS (250 aa).

DNA-binding regions (H-T-H motif) lie at residues 53–76 (FKKI…VLVK) and 177–200 (LKDL…NLKK).

Belongs to the SarA family.

The protein localises to the cytoplasm. Functionally, transcriptional regulator that controls expression of some virulence factors in a cell density-dependent manner. This Staphylococcus aureus (strain Mu3 / ATCC 700698) protein is HTH-type transcriptional regulator SarS (sarS).